The chain runs to 545 residues: Glucose-6-phosphate isomerase (545 aa).

E351 (proton donor) is an active-site residue. Active-site residues include H382 and K510.

This sequence belongs to the GPI family.

The protein localises to the cytoplasm. It carries out the reaction alpha-D-glucose 6-phosphate = beta-D-fructose 6-phosphate. It participates in carbohydrate biosynthesis; gluconeogenesis. Its pathway is carbohydrate degradation; glycolysis; D-glyceraldehyde 3-phosphate and glycerone phosphate from D-glucose: step 2/4. Functionally, catalyzes the reversible isomerization of glucose-6-phosphate to fructose-6-phosphate. This Shewanella amazonensis (strain ATCC BAA-1098 / SB2B) protein is Glucose-6-phosphate isomerase.